A 276-amino-acid polypeptide reads, in one-letter code: Protease HtpX homolog (276 aa).

Residues 16–36 (LFIWFGGMIAGQTGMVIAFLV) form a helical membrane-spanning segment. Zn(2+) is bound at residue His-130. Residue Glu-131 is part of the active site. Position 134 (His-134) interacts with Zn(2+). Helical transmembrane passes span 142 to 162 (IGTVAATIAGAIAMLANFGMF) and 173 to 193 (IFVMLALMFIMPMAASIIQMT). Glu-199 is a Zn(2+) binding site.

The protein belongs to the peptidase M48B family. Zn(2+) is required as a cofactor.

It is found in the cell inner membrane. This chain is Protease HtpX homolog, found in Sulfurovum sp. (strain NBC37-1).